The following is a 536-amino-acid chain: Glutamyl-tRNA(Gln) amidotransferase subunit B, mitochondrial (536 aa).

This sequence belongs to the GatB/GatE family. GatB subfamily. Subunit of the heterotrimeric GatFAB amidotransferase (AdT) complex, composed of A, B and F subunits.

It is found in the mitochondrion. It carries out the reaction L-glutamyl-tRNA(Gln) + L-glutamine + ATP + H2O = L-glutaminyl-tRNA(Gln) + L-glutamate + ADP + phosphate + H(+). Functionally, allows the formation of correctly charged Gln-tRNA(Gln) through the transamidation of misacylated Glu-tRNA(Gln) in the mitochondria. The reaction takes place in the presence of glutamine and ATP through an activated gamma-phospho-Glu-tRNA(Gln). This chain is Glutamyl-tRNA(Gln) amidotransferase subunit B, mitochondrial, found in Vanderwaltozyma polyspora (strain ATCC 22028 / DSM 70294 / BCRC 21397 / CBS 2163 / NBRC 10782 / NRRL Y-8283 / UCD 57-17) (Kluyveromyces polysporus).